The chain runs to 784 residues: E3 ubiquitin-protein ligase RNF43 (784 aa).

Positions 1 to 23 (MSGGHQLQLAVLWPWLLMATLHA) are cleaved as a signal peptide. Over 24–197 (GFGHTGRVLA…LKEPPAGANY (174 aa)) the chain is Extracellular. 2 N-linked (GlcNAc...) asparagine glycosylation sites follow: asparagine 62 and asparagine 92. Cysteine 91 and cysteine 119 are joined by a disulfide. The chain crosses the membrane as a helical span at residues 198–218 (DVWILLTVVGTVFVIILASVL). The Cytoplasmic segment spans residues 219-784 (RIRCRPHHSR…ELEELCEQAV (566 aa)). The RING-type; atypical zinc-finger motif lies at 272-313 (CAICLEEFSEGQELRVISCLHEFHRTCVDPWLYQHRTCPLCM). Disordered stretches follow at residues 364-407 (TSVA…HLAV), 459-478 (ADGPASDSSSGPCHGSSSDS), and 516-671 (DLQG…SLPP). The segment covering 386 to 395 (RHQRLPRTSH) has biased composition (basic residues). Residues 464–478 (SDSSSGPCHGSSSDS) show a composition bias toward low complexity. The segment covering 548–568 (IHYHRHRHHHYKRQFQWHGRK) has biased composition (basic residues). Over residues 583–608 (SHTQLEPSLPDQQLITPNPTASSMLP) the composition is skewed to polar residues. Low complexity predominate over residues 618 to 629 (EPAPGLAEASSP).

It belongs to the ZNRF3 family. As to quaternary structure, interacts with AKAP8L, NONO and SFPQ. Interacts with FZD5. Identified in a complex composed of RNF43, LGR5 and RSPO1. Interacts with RSPO2. Interacts with LMBR1L. Post-translationally, autoubiquitinated. Expressed in crypt base columnar cells of small intestinal epithelium. Crypt base columnar cells are small cycling cells residing between the terminally differentiated Paneth cells at crypt bottoms. Colocalizes with Lgr5-positive stem cells.

It localises to the cell membrane. The protein localises to the endoplasmic reticulum membrane. It is found in the nucleus envelope. The enzyme catalyses S-ubiquitinyl-[E2 ubiquitin-conjugating enzyme]-L-cysteine + [acceptor protein]-L-lysine = [E2 ubiquitin-conjugating enzyme]-L-cysteine + N(6)-ubiquitinyl-[acceptor protein]-L-lysine.. It participates in protein modification; protein ubiquitination. Functionally, E3 ubiquitin-protein ligase that acts as a negative regulator of the Wnt signaling pathway by mediating the ubiquitination, endocytosis and subsequent degradation of Wnt receptor complex components Frizzled. Acts on both canonical and non-canonical Wnt signaling pathway. Along with RSPO2 and ZNRF3, constitutes a master switch that governs limb specification. The protein is E3 ubiquitin-protein ligase RNF43 (Rnf43) of Mus musculus (Mouse).